The sequence spans 189 residues: Elongation factor P (189 aa).

Lys-34 carries the N6-(3,6-diaminohexanoyl)-5-hydroxylysine modification.

Belongs to the elongation factor P family. Post-translationally, may be beta-lysylated on the epsilon-amino group of Lys-34 by the combined action of EpmA and EpmB, and then hydroxylated on the C5 position of the same residue by EpmC (if this protein is present). Lysylation is critical for the stimulatory effect of EF-P on peptide-bond formation. The lysylation moiety may extend toward the peptidyltransferase center and stabilize the terminal 3-CCA end of the tRNA. Hydroxylation of the C5 position on Lys-34 may allow additional potential stabilizing hydrogen-bond interactions with the P-tRNA.

Its subcellular location is the cytoplasm. Its pathway is protein biosynthesis; polypeptide chain elongation. Functionally, involved in peptide bond synthesis. Alleviates ribosome stalling that occurs when 3 or more consecutive Pro residues or the sequence PPG is present in a protein, possibly by augmenting the peptidyl transferase activity of the ribosome. Modification of Lys-34 is required for alleviation. The sequence is that of Elongation factor P from Idiomarina loihiensis (strain ATCC BAA-735 / DSM 15497 / L2-TR).